We begin with the raw amino-acid sequence, 2054 residues long: Multiple PDZ domain protein (2054 aa).

Residues 3-63 (ETIDKNRALQ…SLQQLKDQVN (61 aa)) form the L27 domain. In terms of domain architecture, PDZ 1 spans 138–225 (IFELLKPPCG…TIQLVIARGS (88 aa)). Phosphoserine is present on serine 231. PDZ domains are found at residues 258-338 (TIEL…ARGA), 377-463 (DVEL…MRKG), 545-626 (VAHV…CRRT), and 692-778 (AIEL…VAKP). Residues serine 782 and serine 1065 each carry the phosphoserine modification. One can recognise a PDZ 6 domain in the interval 995–1076 (TVTIAKGSSS…IGPDIKITYV (82 aa)). The segment at 1110–1129 (PELPEREEGEGEESELQNAA) is disordered. One can recognise a PDZ 7 domain in the interval 1138 to 1230 (RVELWREPSK…PVVFMVQSIV (93 aa)). At arginine 1157 the chain carries Omega-N-methylarginine. The span at 1261-1273 (LQLTSDKAPSQSE) shows a compositional bias: polar residues. The disordered stretch occupies residues 1261–1312 (LQLTSDKAPSQSESESEKATLCSVPSSSPSVFSEMSSDYAQPSATTVAEDED). The span at 1283 to 1297 (SVPSSSPSVFSEMSS) shows a compositional bias: low complexity. In terms of domain architecture, PDZ 8 spans 1337–1420 (MIELEKGHSG…KVKIIFIRNA (84 aa)). A disordered region spans residues 1433-1454 (AADPLPSTSESPQNKEVEPSIT). Positions 1470 to 1551 (HLELPKDQGG…TVKLTVGAEN (82 aa)) constitute a PDZ 9 domain. The disordered stretch occupies residues 1560–1594 (AAVTASGERKDSSQTPAVPAPDLEPIPSTSRSSTP). 2 consecutive PDZ domains span residues 1613-1696 (TIEI…YRDE) and 1709-1791 (TVEL…GRIK). The segment at 1795-1834 (FHSERRPSQSSQVSESSLSSFSLPRSGIHTSESSESSAKK) is disordered. Phosphoserine occurs at positions 1802 and 1808. Low complexity predominate over residues 1802 to 1834 (SQSSQVSESSLSSFSLPRSGIHTSESSESSAKK). PDZ domains follow at residues 1846–1932 (TVEI…VAGG) and 1971–2054 (TITL…MVLS).

In terms of assembly, interacts with F11R/JAM, CLDN1, NG2, CXADR, CRB1, MPP4 and PALS1, HTR2A, HTR2B, PLEKHA1/TAPP1 and PLEKHA2/TAPP2. Interacts with CXADR. Interacts with HTR2C, CLDN5, DLG4, GRIN1, SYNGAP1, CAMK2A and CAMK2B. Interacts with FAT4 (via cytoplasmic domain). Interacts with DLL1. In terms of tissue distribution, abundant in all cerebral cortical layers, especially the piriform cortex, the pyramidal cells of the CA1-CA3 subfields of the hippocampus, as well as the granular layer of the dentate gyrus. Detected in the internal granular layer and the mitral cell layer of the olfactory bulb; in the medial habenular nucleus; and in amygdaloid, thalamic, hypothalamic, and pontine nuclei. In the cerebellum, found at high levels in the granular layer. Detected in the lateral ventricle. Expression overlaps with 5-HT2C receptor expression in all regions of the brain including the choroid plexus, where 5-HT2C receptors are highly enriched.

It is found in the endomembrane system. It localises to the cell junction. Its subcellular location is the tight junction. The protein localises to the synapse. The protein resides in the apical cell membrane. It is found in the postsynaptic density. It localises to the cell projection. Its subcellular location is the dendrite. The protein localises to the synaptosome. Functionally, member of the NMDAR signaling complex that may play a role in control of AMPAR potentiation and synaptic plasticity in excitatory synapses. Promotes clustering of HT2RC at the cell surface. The chain is Multiple PDZ domain protein (Mpdz) from Rattus norvegicus (Rat).